An 89-amino-acid chain; its full sequence is Insulin (89 aa).

Intrachain disulfides connect C7-C75, C19-C88, and C74-C79. Residues D33–M66 constitute a propeptide, c peptide.

This sequence belongs to the insulin family. In terms of assembly, heterodimer of a B chain and an A chain linked by two disulfide bonds.

Its subcellular location is the secreted. Its function is as follows. Insulin decreases blood glucose concentration. It increases cell permeability to monosaccharides, amino acids and fatty acids. It accelerates glycolysis, the pentose phosphate cycle, and glycogen synthesis in liver. The sequence is that of Insulin (ins) from Callorhinchus milii (Ghost shark).